The chain runs to 168 residues: Transcription antitermination protein NusB (168 aa).

This sequence belongs to the NusB family.

Its function is as follows. Involved in transcription antitermination. Required for transcription of ribosomal RNA (rRNA) genes. Binds specifically to the boxA antiterminator sequence of the ribosomal RNA (rrn) operons. The polypeptide is Transcription antitermination protein NusB (Deinococcus deserti (strain DSM 17065 / CIP 109153 / LMG 22923 / VCD115)).